The following is a 320-amino-acid chain: Olfactory receptor 51E2 (320 aa).

The Extracellular portion of the chain corresponds to 1-24; that stretch reads MSSCNFTHATFMLIGIPGLEEAHF. N-linked (GlcNAc...) asparagine glycosylation is present at Asn5. A helical transmembrane segment spans residues 25–45; the sequence is WFGFPLLSMYAVALFGNCIVV. Residues 46 to 53 are Cytoplasmic-facing; sequence FIVRTERS. The chain crosses the membrane as a helical span at residues 54 to 74; the sequence is LHAPMYLFLCMLAAIDLALST. Topologically, residues 75 to 98 are extracellular; that stretch reads STMPKILALFWFDSREITFDACLA. Cys96 and Cys178 are oxidised to a cystine. Residues 99 to 119 traverse the membrane as a helical segment; it reads QMFFIHALSAIESTILLAMAF. At 120-138 the chain is on the cytoplasmic side; sequence DRYVAICHPLRHAAVLNNT. Residues 139-159 form a helical membrane-spanning segment; it reads VTVQIGMVALVRGSLFFFPLP. At 160 to 195 the chain is on the extracellular side; sequence LLIKRLAFCHSNVLSHSYCVHQDVMKLAYTDTLPNV. The chain crosses the membrane as a helical span at residues 196-216; sequence VYGLTAILLVMGVDVMFISLS. The Cytoplasmic segment spans residues 217-236; the sequence is YFLIIRAVLQLPSKSERAKA. A helical membrane pass occupies residues 237–257; it reads FGTCVSHIGVVLAFYVPLIGL. Over 258–272 the chain is Extracellular; that stretch reads SVVHRFGNSLDPIVH. Residues 273 to 293 form a helical membrane-spanning segment; that stretch reads VLMGDVYLLLPPVINPIIYGA. The Cytoplasmic segment spans residues 294-320; the sequence is KTKQIRTRVLAMFKISCDKDIEAGGNT.

Belongs to the G-protein coupled receptor 1 family. In terms of tissue distribution, expressed in brain and liver. Expressed only in some areas of the brain and in the olfactory epithelium.

It localises to the cell membrane. The protein localises to the early endosome membrane. Olfactory receptor. The activity of this receptor is probably mediated by G-proteins which induce elevation of intracellular Ca(2+), cAMP and activation of phosphorylation of the protein kinases PKA and MAPK3/MAPK1. Activation of OR51E2 may affect melanocyte proliferation, differentiation, and melanogenesis and may increase proliferation and migration of primary retinal pigment epithelial (RPE) cells. Activated by the short chain fatty acids (SCFA), acetate and propionate. In response to SCFA, may positively regulate renin secretion and increase blood pressure. May also be activated by steroid hormones and regulate cell proliferation. Activated by L-lactate in glomus cells. The polypeptide is Olfactory receptor 51E2 (Or51e2) (Rattus norvegicus (Rat)).